Reading from the N-terminus, the 453-residue chain is Alpha-2B adrenergic receptor (453 aa).

The Extracellular portion of the chain corresponds to 1–17 (MSGPAMVHQEPYSVQAT). A helical transmembrane segment spans residues 18-42 (AAIASAITFLILFTIFGNALVILAV). The Cytoplasmic portion of the chain corresponds to 43-54 (LTSRSLRAPQNL). Residues 55-80 (FLVSLAAADILVATLIIPFSLANELL) traverse the membrane as a helical segment. At 81-90 (GYWYFWRAWC) the chain is on the extracellular side. Residues Cys90 and Cys169 are joined by a disulfide bond. Residues 91 to 113 (EVYLALDVLFCTSSIVHLCAISL) form a helical membrane-spanning segment. Over 114–135 (DRYWAVSRALEYNSKRTPRRIK) the chain is Cytoplasmic. Residues 136-158 (CIILTVWLIAAVISLPPLIYKGD) traverse the membrane as a helical segment. Over 159-174 (QRPEPHGLPQCELNQE) the chain is Extracellular. A helical transmembrane segment spans residues 175 to 198 (AWYILASSIGSFFAPCLIMILVYL). The Cytoplasmic portion of the chain corresponds to 199-375 (RIYVIAKRSH…LSREKRFTFV (177 aa)). The disordered stretch occupies residues 214-329 (AKRGSGEGES…ASPASVFNPP (116 aa)). Over residues 303–314 (AEEDEEEVEECE) the composition is skewed to acidic residues. A helical transmembrane segment spans residues 376 to 399 (LAVVIGVFVVCWFPFFFSYSLGAI). Topologically, residues 400-408 (CPQHCKVPH) are extracellular. The chain crosses the membrane as a helical span at residues 409-432 (GLFQFFFWIGYCNSSLNPVIYTIF). The Cytoplasmic segment spans residues 433–453 (NQDFRRAFRRILCRQWTQTGW). A lipid anchor (S-palmitoyl cysteine) is attached at Cys445.

It belongs to the G-protein coupled receptor 1 family. Adrenergic receptor subfamily. ADRA2B sub-subfamily. In terms of assembly, interacts with RAB26. Interacts with PPP1R9B. Interacts with GGA1, GGA2 and GGA3.

It is found in the cell membrane. Alpha-2 adrenergic receptors mediate the catecholamine-induced inhibition of adenylate cyclase through the action of G proteins. In Mus musculus (Mouse), this protein is Alpha-2B adrenergic receptor (Adra2b).